The sequence spans 570 residues: Hemagglutinin-neuraminidase (570 aa).

Residues 1 to 26 lie on the Intravirion side of the membrane; it reads MNRAVCQVALENDEREAKNTWRLVFR. The chain crosses the membrane as a helical span at residues 27 to 48; sequence IAILLLTVMTLAISAAALAYSM. At 49–570 the chain is on the virion surface side; that stretch reads EASTPGDLVS…LVEILKDDGV (522 aa). N-linked (GlcNAc...) asparagine; by host glycosylation occurs at asparagine 119. The segment at 124–152 is important for interaction with fusion/F protein; the sequence is GAPVHDPDYIGGIGKELIVDDTSDVTSFY. 3 disulfide bridges follow: cysteine 172–cysteine 195, cysteine 185–cysteine 246, and cysteine 237–cysteine 250. The segment at 233-238 is involved in neuraminidase activity; sequence NRKSCS. N-linked (GlcNAc...) asparagine; by host glycans are attached at residues asparagine 340 and asparagine 432. 2 disulfide bridges follow: cysteine 343/cysteine 460 and cysteine 454/cysteine 464. N-linked (GlcNAc...) asparagine; by host glycans are attached at residues asparagine 480, asparagine 507, and asparagine 537. Residues cysteine 530 and cysteine 541 are joined by a disulfide bond.

The protein belongs to the paramyxoviruses hemagglutinin-neuraminidase family. As to quaternary structure, homotetramer; composed of disulfide-linked homodimers. Interacts with F protein trimer. Interacts with host CG-1B; this interaction inhibits viral adsorption and replication rather than internalization.

The protein resides in the virion membrane. It localises to the host cell membrane. The catalysed reaction is Hydrolysis of alpha-(2-&gt;3)-, alpha-(2-&gt;6)-, alpha-(2-&gt;8)- glycosidic linkages of terminal sialic acid residues in oligosaccharides, glycoproteins, glycolipids, colominic acid and synthetic substrates.. In terms of biological role, mediates the viral entry into the host cell together with fusion/F protein. Attaches the virus to sialic acid-containing cell receptors and thereby initiates infection. Binding of HN protein to the receptor induces a conformational change that allows the F protein to trigger virion/cell membranes fusion. Its function is as follows. Neuraminidase activity ensures the efficient spread of the virus by dissociating the mature virions from the neuraminic acid containing glycoproteins. This chain is Hemagglutinin-neuraminidase (HN), found in Gallus gallus (Chicken).